We begin with the raw amino-acid sequence, 677 residues long: Methionine--tRNA ligase (677 aa).

The short motif at 15-25 (PYANGSIHLGH) is the 'HIGH' region element. Residues Cys146, Cys149, Cys159, and Cys162 each coordinate Zn(2+). The short motif at 333 to 337 (KMSKS) is the 'KMSKS' region element. Lys336 is an ATP binding site. One can recognise a tRNA-binding domain in the interval 575–677 (DFAKVDLRVA…AGAKPGHQVK (103 aa)).

This sequence belongs to the class-I aminoacyl-tRNA synthetase family. MetG type 1 subfamily. Homodimer. Requires Zn(2+) as cofactor.

It localises to the cytoplasm. The catalysed reaction is tRNA(Met) + L-methionine + ATP = L-methionyl-tRNA(Met) + AMP + diphosphate. In terms of biological role, is required not only for elongation of protein synthesis but also for the initiation of all mRNA translation through initiator tRNA(fMet) aminoacylation. This chain is Methionine--tRNA ligase, found in Shigella sonnei (strain Ss046).